Reading from the N-terminus, the 448-residue chain is Pentatricopeptide repeat-containing protein At1g80550, mitochondrial (448 aa).

The N-terminal 21 residues, 1 to 21 (MLLLRRLNRVRIASPYSVRLL), are a transit peptide targeting the mitochondrion. 10 PPR repeats span residues 80–110 (TTETFNRVIDILGKYFEFEISWALINRMIGN), 116–146 (NHVTFRIVFKRYVTAHLVQEAIDAYDKLDDF), 150–186 (DETSFYNLVDALCEHKHVVEAEELCFGKNVIGNGFSV), 188–222 (NTKIHNLILRGWSKLGWWGKCKEYWKKMDTEGVTK), 223–257 (DLFSYSIYMDIMCKSGKPWKAVKLYKEMKSRRMKL), 258–292 (DVVAYNTVIRAIGASQGVEFGIRVFREMRERGCEP), 293–327 (NVATHNTIIKLLCEDGRMRDAYRMLDEMPKRGCQP), 331–359 (TYMCLFSRLEKPSEILSLFGRMIRSGVRP), 360–394 (KMDTYVMLMRKFERWGFLQPVLYVWKTMKESGDTP), and 395–429 (DSAAYNAVIDALIQKGMLDMAREYEEEMIERGLSP).

The protein belongs to the PPR family. P subfamily.

The protein localises to the mitochondrion. This is Pentatricopeptide repeat-containing protein At1g80550, mitochondrial from Arabidopsis thaliana (Mouse-ear cress).